Here is a 294-residue protein sequence, read N- to C-terminus: Acetyl-coenzyme A carboxylase carboxyl transferase subunit beta (294 aa).

The 268-residue stretch at 27–294 (LWHKCPSCDA…PSPVALPVTA (268 aa)) folds into the CoA carboxyltransferase N-terminal domain. Positions 31, 34, 50, and 53 each coordinate Zn(2+). The C4-type zinc-finger motif lies at 31–53 (CPSCDAVLYRPELEKTLDVCPKC).

This sequence belongs to the AccD/PCCB family. In terms of assembly, acetyl-CoA carboxylase is a heterohexamer composed of biotin carboxyl carrier protein (AccB), biotin carboxylase (AccC) and two subunits each of ACCase subunit alpha (AccA) and ACCase subunit beta (AccD). It depends on Zn(2+) as a cofactor.

The protein resides in the cytoplasm. The enzyme catalyses N(6)-carboxybiotinyl-L-lysyl-[protein] + acetyl-CoA = N(6)-biotinyl-L-lysyl-[protein] + malonyl-CoA. Its pathway is lipid metabolism; malonyl-CoA biosynthesis; malonyl-CoA from acetyl-CoA: step 1/1. Its function is as follows. Component of the acetyl coenzyme A carboxylase (ACC) complex. Biotin carboxylase (BC) catalyzes the carboxylation of biotin on its carrier protein (BCCP) and then the CO(2) group is transferred by the transcarboxylase to acetyl-CoA to form malonyl-CoA. This Ectopseudomonas mendocina (strain ymp) (Pseudomonas mendocina) protein is Acetyl-coenzyme A carboxylase carboxyl transferase subunit beta.